The following is a 130-amino-acid chain: Small ribosomal subunit protein uS9 (130 aa).

The protein belongs to the universal ribosomal protein uS9 family.

In Stenotrophomonas maltophilia (strain R551-3), this protein is Small ribosomal subunit protein uS9.